The primary structure comprises 246 residues: Acetoacetate decarboxylase (246 aa).

The Schiff-base intermediate with acetoacetate role is filled by Lys116.

It belongs to the ADC family.

It catalyses the reaction acetoacetate + H(+) = acetone + CO2. Its function is as follows. Catalyzes the conversion of acetoacetate to acetone and carbon dioxide. The polypeptide is Acetoacetate decarboxylase (Clostridium botulinum (strain Eklund 17B / Type B)).